The primary structure comprises 355 residues: Protein pelota homolog (355 aa).

It belongs to the eukaryotic release factor 1 family. Pelota subfamily. In terms of assembly, monomer. A divalent metal cation serves as cofactor.

The protein resides in the cytoplasm. Functionally, may function in recognizing stalled ribosomes, interact with stem-loop structures in stalled mRNA molecules, and effect endonucleolytic cleavage of the mRNA. May play a role in the release non-functional ribosomes and degradation of damaged mRNAs. Has endoribonuclease activity. This Halorubrum lacusprofundi (strain ATCC 49239 / DSM 5036 / JCM 8891 / ACAM 34) protein is Protein pelota homolog.